Here is a 1097-residue protein sequence, read N- to C-terminus: DNA polymerase catalytic subunit (1097 aa).

A disordered region spans residues 1069-1097 (RGGDDSDGGDSEKENMDTERSSSHEAMET). Basic and acidic residues predominate over residues 1078–1097 (DSEKENMDTERSSSHEAMET).

Belongs to the DNA polymerase type-B family.

The protein resides in the host nucleus. It catalyses the reaction DNA(n) + a 2'-deoxyribonucleoside 5'-triphosphate = DNA(n+1) + diphosphate. In Murid herpesvirus 1 (strain Smith) (MuHV-1), this protein is DNA polymerase catalytic subunit (UL54).